The primary structure comprises 332 residues: uncharacterized protein (332 aa).

Positions 1–32 (MSRDRGARGLRKYGRFALATGAATALSLTASG) are cleaved as a signal peptide. Cys33 carries the N-palmitoyl cysteine lipid modification. Cys33 carries the S-diacylglycerol cysteine lipid modification.

Its subcellular location is the cell membrane. This is an uncharacterized protein from Streptomyces avermitilis (strain ATCC 31267 / DSM 46492 / JCM 5070 / NBRC 14893 / NCIMB 12804 / NRRL 8165 / MA-4680).